The primary structure comprises 618 residues: Dihydroxy-acid dehydratase (618 aa).

Aspartate 81 contributes to the Mg(2+) binding site. Residue cysteine 122 coordinates [2Fe-2S] cluster. Residues aspartate 123 and lysine 124 each coordinate Mg(2+). N6-carboxylysine is present on lysine 124. [2Fe-2S] cluster is bound at residue cysteine 195. Glutamate 492 contacts Mg(2+). Serine 518 functions as the Proton acceptor in the catalytic mechanism.

This sequence belongs to the IlvD/Edd family. In terms of assembly, homodimer. The cofactor is [2Fe-2S] cluster. It depends on Mg(2+) as a cofactor.

The catalysed reaction is (2R)-2,3-dihydroxy-3-methylbutanoate = 3-methyl-2-oxobutanoate + H2O. The enzyme catalyses (2R,3R)-2,3-dihydroxy-3-methylpentanoate = (S)-3-methyl-2-oxopentanoate + H2O. Its pathway is amino-acid biosynthesis; L-isoleucine biosynthesis; L-isoleucine from 2-oxobutanoate: step 3/4. The protein operates within amino-acid biosynthesis; L-valine biosynthesis; L-valine from pyruvate: step 3/4. Functions in the biosynthesis of branched-chain amino acids. Catalyzes the dehydration of (2R,3R)-2,3-dihydroxy-3-methylpentanoate (2,3-dihydroxy-3-methylvalerate) into 2-oxo-3-methylpentanoate (2-oxo-3-methylvalerate) and of (2R)-2,3-dihydroxy-3-methylbutanoate (2,3-dihydroxyisovalerate) into 2-oxo-3-methylbutanoate (2-oxoisovalerate), the penultimate precursor to L-isoleucine and L-valine, respectively. This is Dihydroxy-acid dehydratase from Zymomonas mobilis subsp. mobilis (strain ATCC 31821 / ZM4 / CP4).